The chain runs to 395 residues: Chaperone protein DnaJ (395 aa).

Positions 4–69 (DYYEVLGLSR…DKRRRYDQFG (66 aa)) constitute a J domain. A CR-type zinc finger spans residues 151–232 (GVEKTLKIKK…CYGEGIKQGE (82 aa)). C164, C167, C180, C183, C206, C209, C220, and C223 together coordinate Zn(2+). 4 CXXCXGXG motif repeats span residues 164 to 171 (CTECNGTG), 180 to 187 (CPTCHGSG), 206 to 213 (CPTCGGEG), and 220 to 227 (CVSCYGEG).

The protein belongs to the DnaJ family. As to quaternary structure, homodimer. Zn(2+) serves as cofactor.

The protein resides in the cytoplasm. In terms of biological role, participates actively in the response to hyperosmotic and heat shock by preventing the aggregation of stress-denatured proteins and by disaggregating proteins, also in an autonomous, DnaK-independent fashion. Unfolded proteins bind initially to DnaJ; upon interaction with the DnaJ-bound protein, DnaK hydrolyzes its bound ATP, resulting in the formation of a stable complex. GrpE releases ADP from DnaK; ATP binding to DnaK triggers the release of the substrate protein, thus completing the reaction cycle. Several rounds of ATP-dependent interactions between DnaJ, DnaK and GrpE are required for fully efficient folding. Also involved, together with DnaK and GrpE, in the DNA replication of plasmids through activation of initiation proteins. The sequence is that of Chaperone protein DnaJ from Chlorobium phaeobacteroides (strain DSM 266 / SMG 266 / 2430).